Reading from the N-terminus, the 417-residue chain is Gamma-glutamyl phosphate reductase (417 aa).

Belongs to the gamma-glutamyl phosphate reductase family.

Its subcellular location is the cytoplasm. The enzyme catalyses L-glutamate 5-semialdehyde + phosphate + NADP(+) = L-glutamyl 5-phosphate + NADPH + H(+). Its pathway is amino-acid biosynthesis; L-proline biosynthesis; L-glutamate 5-semialdehyde from L-glutamate: step 2/2. Functionally, catalyzes the NADPH-dependent reduction of L-glutamate 5-phosphate into L-glutamate 5-semialdehyde and phosphate. The product spontaneously undergoes cyclization to form 1-pyrroline-5-carboxylate. The protein is Gamma-glutamyl phosphate reductase of Enterococcus faecalis (strain ATCC 700802 / V583).